Consider the following 85-residue polypeptide: DNA-directed RNA polymerase subunit omega (85 aa).

The protein belongs to the RNA polymerase subunit omega family. As to quaternary structure, the RNAP catalytic core consists of 2 alpha, 1 beta, 1 beta' and 1 omega subunit. When a sigma factor is associated with the core the holoenzyme is formed, which can initiate transcription.

The catalysed reaction is RNA(n) + a ribonucleoside 5'-triphosphate = RNA(n+1) + diphosphate. Functionally, promotes RNA polymerase assembly. Latches the N- and C-terminal regions of the beta' subunit thereby facilitating its interaction with the beta and alpha subunits. The sequence is that of DNA-directed RNA polymerase subunit omega from Latilactobacillus sakei subsp. sakei (strain 23K) (Lactobacillus sakei subsp. sakei).